Consider the following 293-residue polypeptide: Histamine N-methyltransferase B (293 aa).

Glu28 provides a ligand contact to substrate. Positions 60, 89, 94, 120, and 142 each coordinate S-adenosyl-L-methionine. Residue Asn283 coordinates substrate.

It belongs to the class I-like SAM-binding methyltransferase superfamily. HNMT family. As to quaternary structure, monomer.

Its subcellular location is the cytoplasm. The catalysed reaction is histamine + S-adenosyl-L-methionine = N(tau)-methylhistamine + S-adenosyl-L-homocysteine + H(+). Functionally, inactivates histamine by N-methylation. Plays an important role in degrading histamine and in regulating the airway response to histamine. This chain is Histamine N-methyltransferase B (hnmt-b), found in Xenopus laevis (African clawed frog).